The following is a 304-amino-acid chain: Acetyl-coenzyme A carboxylase carboxyl transferase subunit beta (304 aa).

Residues 23 to 292 (VWTKCDSCGQ…PNPEAPREGV (270 aa)) form the CoA carboxyltransferase N-terminal domain. Zn(2+) contacts are provided by cysteine 27, cysteine 30, cysteine 46, and cysteine 49. The C4-type zinc finger occupies 27–49 (CDSCGQVLYRAELERNLEVCPKC). The interval 284-304 (NPEAPREGVVVPPVPDQEPEA) is disordered. Positions 295–304 (PPVPDQEPEA) are enriched in pro residues.

This sequence belongs to the AccD/PCCB family. As to quaternary structure, acetyl-CoA carboxylase is a heterohexamer composed of biotin carboxyl carrier protein (AccB), biotin carboxylase (AccC) and two subunits each of ACCase subunit alpha (AccA) and ACCase subunit beta (AccD). It depends on Zn(2+) as a cofactor.

Its subcellular location is the cytoplasm. It carries out the reaction N(6)-carboxybiotinyl-L-lysyl-[protein] + acetyl-CoA = N(6)-biotinyl-L-lysyl-[protein] + malonyl-CoA. The protein operates within lipid metabolism; malonyl-CoA biosynthesis; malonyl-CoA from acetyl-CoA: step 1/1. Functionally, component of the acetyl coenzyme A carboxylase (ACC) complex. Biotin carboxylase (BC) catalyzes the carboxylation of biotin on its carrier protein (BCCP) and then the CO(2) group is transferred by the transcarboxylase to acetyl-CoA to form malonyl-CoA. The polypeptide is Acetyl-coenzyme A carboxylase carboxyl transferase subunit beta (Shigella boydii serotype 18 (strain CDC 3083-94 / BS512)).